The primary structure comprises 571 residues: Proline--tRNA ligase (571 aa).

The protein belongs to the class-II aminoacyl-tRNA synthetase family. ProS type 1 subfamily. In terms of assembly, homodimer.

It localises to the cytoplasm. The enzyme catalyses tRNA(Pro) + L-proline + ATP = L-prolyl-tRNA(Pro) + AMP + diphosphate. In terms of biological role, catalyzes the attachment of proline to tRNA(Pro) in a two-step reaction: proline is first activated by ATP to form Pro-AMP and then transferred to the acceptor end of tRNA(Pro). As ProRS can inadvertently accommodate and process non-cognate amino acids such as alanine and cysteine, to avoid such errors it has two additional distinct editing activities against alanine. One activity is designated as 'pretransfer' editing and involves the tRNA(Pro)-independent hydrolysis of activated Ala-AMP. The other activity is designated 'posttransfer' editing and involves deacylation of mischarged Ala-tRNA(Pro). The misacylated Cys-tRNA(Pro) is not edited by ProRS. The polypeptide is Proline--tRNA ligase (Ligilactobacillus salivarius (strain UCC118) (Lactobacillus salivarius)).